Reading from the N-terminus, the 420-residue chain is Ammonium transporter Amt2 (420 aa).

11 helical membrane passes run 34–54 (VFFLVVMGVLVFMMQWGFAML), 71–91 (NMVDWLIGCVAWLFIGGILCS), 120–140 (SWFFGLVFCATAATIVSGGVA), 149–169 (VLISLIITGLLYPLFVYLGPW), 180–200 (AGSLVVHGLGGFLALGAIAAL), 220–240 (IPMAVFGAFALAIGWYGFNVG), 250–270 (GLVCATTTMAMAGGGIGALIA), 273–293 (NDVLFTANGIVAGLVAICSGT), 295–315 (VVSPIGGLIIGLIAGLQVPIV), 339–359 (VIGAILTGILGLKIFGGAGGV), and 365–385 (IIGAVFCIIYGTGLGYILAKI).

It belongs to the ammonia transporter channel (TC 1.A.11.2) family. Homotrimer. Interacts and forms a complex with GlnK2.

Its subcellular location is the cell membrane. Its function is as follows. Involved in the uptake of ammonium/ammonia (NH(4)(+)/NH(3)). Transport is electrogenic. The sequence is that of Ammonium transporter Amt2 from Methanocaldococcus jannaschii (strain ATCC 43067 / DSM 2661 / JAL-1 / JCM 10045 / NBRC 100440) (Methanococcus jannaschii).